A 361-amino-acid polypeptide reads, in one-letter code: UDP-N-acetylglucosamine--N-acetylmuramyl-(pentapeptide) pyrophosphoryl-undecaprenol N-acetylglucosamine transferase (361 aa).

UDP-N-acetyl-alpha-D-glucosamine contacts are provided by residues 12 to 14 (TGG), asparagine 123, arginine 166, serine 192, and glutamine 293.

Belongs to the glycosyltransferase 28 family. MurG subfamily.

Its subcellular location is the cell inner membrane. The catalysed reaction is di-trans,octa-cis-undecaprenyl diphospho-N-acetyl-alpha-D-muramoyl-L-alanyl-D-glutamyl-meso-2,6-diaminopimeloyl-D-alanyl-D-alanine + UDP-N-acetyl-alpha-D-glucosamine = di-trans,octa-cis-undecaprenyl diphospho-[N-acetyl-alpha-D-glucosaminyl-(1-&gt;4)]-N-acetyl-alpha-D-muramoyl-L-alanyl-D-glutamyl-meso-2,6-diaminopimeloyl-D-alanyl-D-alanine + UDP + H(+). The protein operates within cell wall biogenesis; peptidoglycan biosynthesis. Its function is as follows. Cell wall formation. Catalyzes the transfer of a GlcNAc subunit on undecaprenyl-pyrophosphoryl-MurNAc-pentapeptide (lipid intermediate I) to form undecaprenyl-pyrophosphoryl-MurNAc-(pentapeptide)GlcNAc (lipid intermediate II). This chain is UDP-N-acetylglucosamine--N-acetylmuramyl-(pentapeptide) pyrophosphoryl-undecaprenol N-acetylglucosamine transferase, found in Caulobacter vibrioides (strain ATCC 19089 / CIP 103742 / CB 15) (Caulobacter crescentus).